We begin with the raw amino-acid sequence, 183 residues long: Ribosome rescue factor SmrB (183 aa).

Positions 98–173 (LDLHGLTQKQ…GDAALLVLIE (76 aa)) constitute a Smr domain.

Belongs to the SmrB family. In terms of assembly, associates with collided ribosomes, but not with correctly translating polysomes.

Its function is as follows. Acts as a ribosome collision sensor. Detects stalled/collided disomes (pairs of ribosomes where the leading ribosome is stalled and a second ribosome has collided with it) and endonucleolytically cleaves mRNA at the 5' boundary of the stalled ribosome. Stalled/collided disomes form a new interface (primarily via the 30S subunits) that binds SmrB. Cleaved mRNA becomes available for tmRNA ligation, leading to ribosomal subunit dissociation and rescue of stalled ribosomes. The polypeptide is Ribosome rescue factor SmrB (Erwinia tasmaniensis (strain DSM 17950 / CFBP 7177 / CIP 109463 / NCPPB 4357 / Et1/99)).